We begin with the raw amino-acid sequence, 218 residues long: MIESITGYLFGIVPFGDIVFGFSEFSIIGFITAVIFTIIVYLTKPEKQLEAQKFKIEDKLEVVTLNELKIRRMMAIVCGIATAGAMLTYDLFDYALFLTLVGIANIGIVSAVKREWVLNASYQYGLIAMIATLPLFGSAGMILAKTGTLSIFELPKIQTSLLFEKIIFAAGMAGETGIAPFYAAKAEMFRAPGSPYILMIHLSSLLLIVRTVEILLTI.

The next 5 membrane-spanning stretches (helical) occupy residues 19–39 (VFGFSEFSIIGFITAVIFTII), 92–112 (FDYALFLTLVGIANIGIVSAV), 124–144 (YGLIAMIATLPLFGSAGMILA), 161–181 (LLFEKIIFAAGMAGETGIAPF), and 196–216 (YILMIHLSSLLLIVRTVEILL).

The protein localises to the cell membrane. This is an uncharacterized protein from Methanocaldococcus jannaschii (strain ATCC 43067 / DSM 2661 / JAL-1 / JCM 10045 / NBRC 100440) (Methanococcus jannaschii).